The chain runs to 192 residues: MIAIIDYGLGNISNVTRAIQHLGYDVILTCDDKDVQKAEAIVLPGVGHFQDAMHSIEEKSIKDMLKNIHDKPIIGICLGMQLLFQHSAEGDVSGLELVPGNIVPIQSSHPIPHLGWNELKSTHPLLQSDVYFVHSYQAEMSEYVVAYADYGTKIPGVIQYRNYIGIQFHPEKSGTYGLEILNQALKGGFIND.

In terms of domain architecture, Glutamine amidotransferase type-1 spans 1 to 192; it reads MIAIIDYGLG…QALKGGFIND (192 aa). Cys-77 (nucleophile) is an active-site residue. Catalysis depends on residues His-169 and Glu-171.

Heterodimer of HisH and HisF.

It localises to the cytoplasm. It carries out the reaction 5-[(5-phospho-1-deoxy-D-ribulos-1-ylimino)methylamino]-1-(5-phospho-beta-D-ribosyl)imidazole-4-carboxamide + L-glutamine = D-erythro-1-(imidazol-4-yl)glycerol 3-phosphate + 5-amino-1-(5-phospho-beta-D-ribosyl)imidazole-4-carboxamide + L-glutamate + H(+). It catalyses the reaction L-glutamine + H2O = L-glutamate + NH4(+). The protein operates within amino-acid biosynthesis; L-histidine biosynthesis; L-histidine from 5-phospho-alpha-D-ribose 1-diphosphate: step 5/9. In terms of biological role, IGPS catalyzes the conversion of PRFAR and glutamine to IGP, AICAR and glutamate. The HisH subunit catalyzes the hydrolysis of glutamine to glutamate and ammonia as part of the synthesis of IGP and AICAR. The resulting ammonia molecule is channeled to the active site of HisF. The polypeptide is Imidazole glycerol phosphate synthase subunit HisH (Staphylococcus epidermidis (strain ATCC 35984 / DSM 28319 / BCRC 17069 / CCUG 31568 / BM 3577 / RP62A)).